The following is a 300-amino-acid chain: Glutamyl-Q tRNA(Asp) synthetase (300 aa).

Residues 8–12 (RFAPS) and Glu44 contribute to the L-glutamate site. A 'HIGH' region motif is present at residues 11–21 (PSPTGALHAGS). Zn(2+)-binding residues include Cys100, Cys102, Tyr126, and Cys130. L-glutamate-binding residues include Tyr190 and Arg208. The short motif at 246–250 (KLSKQ) is the 'KMSKS' region element. Position 249 (Lys249) interacts with ATP.

This sequence belongs to the class-I aminoacyl-tRNA synthetase family. GluQ subfamily. Zn(2+) serves as cofactor.

Catalyzes the tRNA-independent activation of glutamate in presence of ATP and the subsequent transfer of glutamate onto a tRNA(Asp). Glutamate is transferred on the 2-amino-5-(4,5-dihydroxy-2-cyclopenten-1-yl) moiety of the queuosine in the wobble position of the QUC anticodon. The sequence is that of Glutamyl-Q tRNA(Asp) synthetase from Leptothrix cholodnii (strain ATCC 51168 / LMG 8142 / SP-6) (Leptothrix discophora (strain SP-6)).